Here is a 279-residue protein sequence, read N- to C-terminus: Pantothenate synthetase (279 aa).

31–38 (MGALHEGH) is a binding site for ATP. Catalysis depends on His-38, which acts as the Proton donor. (R)-pantoate is bound at residue Gln-62. Gln-62 lines the beta-alanine pocket. 148–151 (GEKD) serves as a coordination point for ATP. Position 154 (Gln-154) interacts with (R)-pantoate. ATP is bound by residues Val-177 and 185–188 (LSSR).

The protein belongs to the pantothenate synthetase family. Homodimer.

The protein resides in the cytoplasm. It catalyses the reaction (R)-pantoate + beta-alanine + ATP = (R)-pantothenate + AMP + diphosphate + H(+). The protein operates within cofactor biosynthesis; (R)-pantothenate biosynthesis; (R)-pantothenate from (R)-pantoate and beta-alanine: step 1/1. In terms of biological role, catalyzes the condensation of pantoate with beta-alanine in an ATP-dependent reaction via a pantoyl-adenylate intermediate. In Cereibacter sphaeroides (strain ATCC 17029 / ATH 2.4.9) (Rhodobacter sphaeroides), this protein is Pantothenate synthetase.